We begin with the raw amino-acid sequence, 97 residues long: Putative defensin-like protein 240 (97 aa).

The signal sequence occupies residues 1–23 (MRYTTSFIVFCFYIFLFTNLVQG). 4 disulfides stabilise this stretch: C29-C88, C39-C69, C47-C85, and C67-C87.

Belongs to the DEFL family.

Its subcellular location is the secreted. The sequence is that of Putative defensin-like protein 240 (SCRL18) from Arabidopsis thaliana (Mouse-ear cress).